Consider the following 838-residue polypeptide: Translation initiation factor IF-2 (838 aa).

Positions 50-108 are disordered; it reads VQSGKKPESPEKKDIKQNTQKEAPETQTQQKPIEQEVETKQNIDSTPIKVEPKQESLAS. Over residues 54–65 the composition is skewed to basic and acidic residues; sequence KKPESPEKKDIK. Over residues 66–81 the composition is skewed to polar residues; it reads QNTQKEAPETQTQQKP. Residues 337-506 form the tr-type G domain; the sequence is SRAPVVTIMG…LLQAELLELK (170 aa). The tract at residues 346–353 is G1; that stretch reads GHVDHGKT. 346-353 is a GTP binding site; sequence GHVDHGKT. Positions 371 to 375 are G2; that stretch reads GITQH. Residues 392-395 are G3; that stretch reads DTPG. GTP-binding positions include 392–396 and 446–449; these read DTPGH and NKMD. The tract at residues 446–449 is G4; the sequence is NKMD. A G5 region spans residues 482–484; that stretch reads SAK.

This sequence belongs to the TRAFAC class translation factor GTPase superfamily. Classic translation factor GTPase family. IF-2 subfamily.

The protein localises to the cytoplasm. Functionally, one of the essential components for the initiation of protein synthesis. Protects formylmethionyl-tRNA from spontaneous hydrolysis and promotes its binding to the 30S ribosomal subunits. Also involved in the hydrolysis of GTP during the formation of the 70S ribosomal complex. This chain is Translation initiation factor IF-2, found in Campylobacter fetus subsp. fetus (strain 82-40).